Reading from the N-terminus, the 729-residue chain is Capsid protein VP1 (729 aa).

Residues 1–10 (MAPPAKRAKR) show a composition bias toward basic residues. Disordered stretches follow at residues 1 to 38 (MAPP…SDAA), 96 to 115 (LATD…KRTR), and 130 to 185 (KLTS…VGVS). Positions 4–13 (PAKRAKRGWV) match the Nuclear localization signal motif. A phospholipase A2-like region spans residues 19 to 64 (YLGPGNSLDQGEPTNPSDAAAKEHDEAYDQYIKSGKNPYLYFSAAD). Residues 25–35 (SLDQGEPTNPS) are compositionally biased toward polar residues. Low complexity predominate over residues 132 to 142 (TSSAAQQSSQT). A compositionally biased stretch (polar residues) spans 143-152 (MSDGTSQPDS). Positions 168 to 184 (GPGGSGGGGSGGGGVGV) are enriched in gly residues. Residue N325 coordinates Mg(2+).

Belongs to the parvoviridae capsid protein family.

The protein resides in the virion. It localises to the host nucleus. In terms of biological role, capsid protein self-assembles to form an icosahedral capsid with a T=1 symmetry, about 22 nm in diameter, and consisting of 60 copies of two size variants of the capsid proteins, VP1 and VP2, which differ by the presence of an N-terminal extension in the minor protein VP1. The capsid encapsulates the genomic ssDNA. Capsid proteins are responsible for the attachment to host cell receptors. This attachment induces virion internalization predominantly through clathrin-dependent endocytosis. Binding to the host receptors also induces capsid rearrangements leading to surface exposure of VP1 N-terminus, specifically its phospholipase A2-like region and putative nuclear localization signal(s). VP1 N-terminus might serve as a lipolytic enzyme to breach the endosomal membrane during entry into host cell and might contribute to virus transport to the nucleus. The chain is Capsid protein VP1 from Mus musculus (Mouse).